The following is a 277-amino-acid chain: 4-hydroxybenzoate octaprenyltransferase (277 aa).

A run of 8 helical transmembrane segments spans residues 24–44, 81–101, 102–122, 129–149, 152–172, 201–221, 224–244, and 255–275; these read FAAA…LGVI, VEAK…DLSL, NQYA…YPFM, PQVV…GAVI, LPLT…AYDT, IIAL…WLSE, IGYF…CWLT, and AFLN…VGIY.

Belongs to the UbiA prenyltransferase family. Mg(2+) is required as a cofactor.

It localises to the cell inner membrane. It carries out the reaction all-trans-octaprenyl diphosphate + 4-hydroxybenzoate = 4-hydroxy-3-(all-trans-octaprenyl)benzoate + diphosphate. The protein operates within cofactor biosynthesis; ubiquinone biosynthesis. Catalyzes the prenylation of para-hydroxybenzoate (PHB) with an all-trans polyprenyl group. Mediates the second step in the final reaction sequence of ubiquinone-8 (UQ-8) biosynthesis, which is the condensation of the polyisoprenoid side chain with PHB, generating the first membrane-bound Q intermediate 3-octaprenyl-4-hydroxybenzoate. In Haemophilus ducreyi (strain 35000HP / ATCC 700724), this protein is 4-hydroxybenzoate octaprenyltransferase.